The primary structure comprises 451 residues: Protein naked cuticle homolog 2 (451 aa).

Residues 1-108 (MGKLQSKHAA…PRGPGGQRLN (108 aa)) are disordered. Gly-2 is lipidated: N-myristoyl glycine. Positions 2–173 (GKLQSKHAAA…GSSKTLRVKL (172 aa)) are targeting to the basolateral cell membrane. 2 stretches are compositionally biased toward basic and acidic residues: residues 34–63 (KGAE…REDQ) and 89–99 (DGERAANREGP). The segment at 113–178 (QCDVSVEEDD…LRVKLTVSPE (66 aa)) is interaction with DVL1, DVL2 and DVL3. The EF-hand domain maps to 119-154 (EEDDRQEWTFTLYDFDNCGKVTREDMSSLMHTIYEV). Residues Asp-132, Asp-134, Lys-138, and Asp-143 each contribute to the Ca(2+) site. 2 disordered regions span residues 162-237 (SSGS…PYCV) and 256-408 (YTSR…TVEH). The span at 180–215 (SSKRKEGPPAGQDREPTRCRMEGELAEEPRVADRRL) shows a compositional bias: basic and acidic residues. The segment at 300–385 (QVLVEHVVPA…PPPPYGHKRY (86 aa)) is interaction with TGFA. Low complexity predominate over residues 332 to 351 (KSPKGSGKPPGVPASSKSGK).

Belongs to the NKD family. Interacts with DVL1, DVL2, DVL3 and PPP2R3A. Interacts with RNF25 and TGFA (via cytoplasmic domain). In terms of processing, ubiquitinated, leading to rapid proteasomal degradation. Interaction with TGFA interferes with RNF25 binding and protects against ubiquitination mediated by RNF25. Expressed in kidney, lung, pancreas and spleen.

It localises to the cell membrane. The protein resides in the cytoplasm. The protein localises to the cytoplasmic vesicle. Functionally, cell autonomous antagonist of the canonical Wnt signaling pathway. May activate a second Wnt signaling pathway that controls planar cell polarity. Required for processing of TGFA and for targeting of TGFA to the basolateral membrane of polarized epithelial cells. This chain is Protein naked cuticle homolog 2 (NKD2), found in Homo sapiens (Human).